Here is a 240-residue protein sequence, read N- to C-terminus: Lipoprotein-releasing system ATP-binding protein LolD (240 aa).

The 226-residue stretch at Ile15–Val240 folds into the ABC transporter domain. An ATP-binding site is contributed by Gly51–Ser58.

It belongs to the ABC transporter superfamily. Lipoprotein translocase (TC 3.A.1.125) family. In terms of assembly, the complex is composed of two ATP-binding proteins (LolD) and two transmembrane proteins (LolC and LolE).

The protein localises to the cell inner membrane. Functionally, part of the ABC transporter complex LolCDE involved in the translocation of mature outer membrane-directed lipoproteins, from the inner membrane to the periplasmic chaperone, LolA. Responsible for the formation of the LolA-lipoprotein complex in an ATP-dependent manner. This Xylella fastidiosa (strain Temecula1 / ATCC 700964) protein is Lipoprotein-releasing system ATP-binding protein LolD.